We begin with the raw amino-acid sequence, 223 residues long: Ribose-5-phosphate isomerase A (223 aa).

Residues 28 to 31 (TGST), 81 to 84 (DGAD), and 94 to 97 (KGGG) contribute to the substrate site. E103 serves as the catalytic Proton acceptor. Substrate is bound at residue K121.

The protein belongs to the ribose 5-phosphate isomerase family. In terms of assembly, homodimer.

It carries out the reaction aldehydo-D-ribose 5-phosphate = D-ribulose 5-phosphate. It functions in the pathway carbohydrate degradation; pentose phosphate pathway; D-ribose 5-phosphate from D-ribulose 5-phosphate (non-oxidative stage): step 1/1. Functionally, catalyzes the reversible conversion of ribose-5-phosphate to ribulose 5-phosphate. The polypeptide is Ribose-5-phosphate isomerase A (Herminiimonas arsenicoxydans).